The following is a 589-amino-acid chain: Zinc finger protein 131 (589 aa).

A BTB domain is found at 34–98 (TDITLIVDGH…TYTAKLMIQG (65 aa)). Residues 137-148 (TGKNEAKKRKIA) carry the Nuclear localization signal 1 motif. Basic and acidic residues predominate over residues 224-234 (GDRKGQIKEDG). The tract at residues 224-247 (GDRKGQIKEDGCPSDPTSKQEHMK) is disordered. C2H2-type zinc fingers lie at residues 254 to 277 (FKCE…NCYH) and 294 to 316 (HVCQ…LRKH). Residues Lys255 and Lys261 each participate in a glycyl lysine isopeptide (Lys-Gly) (interchain with G-Cter in SUMO2) cross-link. The short motif at 283–294 (VSKKQRTGKKIH) is the Nuclear localization signal 2 element. A C2H2-type 3; degenerate zinc finger spans residues 322–347 (FECPNCHERFARNSTLKCHLTACQTG). 2 consecutive C2H2-type zinc fingers follow at residues 358 to 380 (YECQ…LVIH) and 386 to 409 (NHCT…SDAH). Residues 539 to 583 (NQEERESSQADAAEAAREDHEDAEDLETKPTVDSEAEKAENEDRT) are compositionally biased toward basic and acidic residues. The interval 539–589 (NQEERESSQADAAEAAREDHEDAEDLETKPTVDSEAEKAENEDRTAMPVLE) is disordered. A Glycyl lysine isopeptide (Lys-Gly) (interchain with G-Cter in SUMO) cross-link involves residue Lys567.

Belongs to the krueppel C2H2-type zinc-finger protein family. Post-translationally, monosumoylated at Lys-567 by CBX4 and UHRF2. Sumoylation may potentiate ZNF131 inhibition of estrogen signaling. Sumoylation does not interfere with ubiquitination. Ubiquitinated.

Its subcellular location is the nucleus. May be involved in transcriptional regulation as a repressor of ESR1/ER-alpha signaling. Plays a role during development and organogenesis as well as in the function of the adult central nervous system. This Pongo abelii (Sumatran orangutan) protein is Zinc finger protein 131 (ZNF131).